Here is a 148-residue protein sequence, read N- to C-terminus: 3-dehydroquinate dehydratase (148 aa).

Tyr-23 (proton acceptor) is an active-site residue. Substrate-binding residues include Asn-75, His-81, and Asp-88. His-101 functions as the Proton donor in the catalytic mechanism. Substrate contacts are provided by residues Leu-102–Ser-103 and Arg-112.

The protein belongs to the type-II 3-dehydroquinase family. In terms of assembly, homododecamer.

It catalyses the reaction 3-dehydroquinate = 3-dehydroshikimate + H2O. It participates in metabolic intermediate biosynthesis; chorismate biosynthesis; chorismate from D-erythrose 4-phosphate and phosphoenolpyruvate: step 3/7. Catalyzes a trans-dehydration via an enolate intermediate. In Xanthomonas axonopodis pv. citri (strain 306), this protein is 3-dehydroquinate dehydratase.